The sequence spans 186 residues: Ras-related protein rapA (186 aa).

GTP is bound at residue 12-19; sequence GSGGVGKS. The Effector region motif lies at 34–42; that stretch reads YDPTIEDSY. GTP-binding positions include 59-63 and 118-121; these read DTAGT and NKCD. Residue C183 is modified to Cysteine methyl ester. C183 is lipidated: S-geranylgeranyl cysteine. Positions 184–186 are cleaved as a propeptide — removed in mature form; sequence ALL.

The protein belongs to the small GTPase superfamily. Ras family. Interacts with ralGDS (only when rapA is in its GTP-bound state). Interacts with the Rap guanine nucleotide exchange factor glfB.

Its subcellular location is the cell membrane. It catalyses the reaction GTP + H2O = GDP + phosphate + H(+). G protein of the Ras family that positively regulates phagocytosis and negatively regulates macropinocytosis. May be involved in the activation of guanylyl cyclase during the response to hyperosmotic conditions. Overexpressing cells generate alterations in cell shape and contractile responses. Involved in chemotaxis via regulation of the balance of Ras and Rap signaling at the leading edge of chemotaxing cells. In Dictyostelium discoideum (Social amoeba), this protein is Ras-related protein rapA (rapA).